We begin with the raw amino-acid sequence, 376 residues long: Chaperone protein DnaJ 2 (376 aa).

A J domain is found at 5–70; the sequence is DYYEVLGVNR…QKRAAYDRYG (66 aa). The CR-type zinc-finger motif lies at 135–213; sequence GADKTIRIPT…CGGAGRVKRQ (79 aa). Residues Cys-148, Cys-151, Cys-165, Cys-168, Cys-187, Cys-190, Cys-201, and Cys-204 each coordinate Zn(2+). CXXCXGXG motif repeat units lie at residues 148–155, 165–172, 187–194, and 201–208; these read CETCHGSG, CPTCGGAG, CPKCHGTG, and CRDCGGAG.

Belongs to the DnaJ family. In terms of assembly, homodimer. Zn(2+) is required as a cofactor.

It localises to the cytoplasm. Its function is as follows. Participates actively in the response to hyperosmotic and heat shock by preventing the aggregation of stress-denatured proteins and by disaggregating proteins, also in an autonomous, DnaK-independent fashion. Unfolded proteins bind initially to DnaJ; upon interaction with the DnaJ-bound protein, DnaK hydrolyzes its bound ATP, resulting in the formation of a stable complex. GrpE releases ADP from DnaK; ATP binding to DnaK triggers the release of the substrate protein, thus completing the reaction cycle. Several rounds of ATP-dependent interactions between DnaJ, DnaK and GrpE are required for fully efficient folding. Also involved, together with DnaK and GrpE, in the DNA replication of plasmids through activation of initiation proteins. The protein is Chaperone protein DnaJ 2 of Aromatoleum aromaticum (strain DSM 19018 / LMG 30748 / EbN1) (Azoarcus sp. (strain EbN1)).